Here is a 152-residue protein sequence, read N- to C-terminus: Flagellar assembly factor FliW (152 aa).

The protein belongs to the FliW family. Interacts with translational regulator CsrA and flagellin(s).

It is found in the cytoplasm. In terms of biological role, acts as an anti-CsrA protein, binds CsrA and prevents it from repressing translation of its target genes, one of which is flagellin. Binds to flagellin and participates in the assembly of the flagellum. The chain is Flagellar assembly factor FliW from Caldicellulosiruptor bescii (strain ATCC BAA-1888 / DSM 6725 / KCTC 15123 / Z-1320) (Anaerocellum thermophilum).